We begin with the raw amino-acid sequence, 509 residues long: MAAIGVHLGCTSACVAVYKDGRADVVANDAGDRVTPAIVAYSEREQVVGLAAKQSRIRHVSSTVVKVKQILGRSSADPQAQKYISESKCLVIEKNGKLRYEIDTGEETKLVNPEDVARLIFSKMKETAHSVLGSDANDVVVTVPFDFGEKQKSALGEAAGAAGFNVLRLIHEPSAALLAYGIGQDHPTGKSNVLVFKLGGTSLSLSVMEVNSGMYRVLSTNTSDNIGGAHFTDTLAQYLASEFQRLFKHDVRGNARAMMKLMNSAEVAKHSLSTLGSANCFVDSLYEGQDFDCNVSRARFELLCSPLFNKCTEAIRELLRQTGFTADDINKVVLCGGSSRIPKLQQLIKDLFPAVDLLNSIPPDEVIPIGAAIEAGILVGKESTSGDDSVMIECSAKDILVKGVDESGADRFTVLFPSGTPLPARRQHTLQAPGRVSSVCLELYESEGKNSAKEEAKFAQVVLQDLDKKENGLRDILAVLTMKRDGSLQVTCTDQDTGKCEAITVEVAS.

This sequence belongs to the heat shock protein 70 family. In terms of assembly, component of ribosome-associated complex (RAC), a heterodimer composed of Hsp70/DnaK-type chaperone HSPA14 and Hsp40/DnaJ-type chaperone DNAJC2.

The protein localises to the cytoplasm. Its subcellular location is the cytosol. Functionally, component of the ribosome-associated complex (RAC), a complex involved in folding or maintaining nascent polypeptides in a folding-competent state. In the RAC complex, binds to the nascent polypeptide chain, while DNAJC2 stimulates its ATPase activity. This chain is Heat shock 70 kDa protein 14 (Hspa14), found in Mus musculus (Mouse).